The sequence spans 498 residues: L-amino acid oxidase Bs29 (498 aa).

A signal peptide spans 1-3 (SCA). An intrachain disulfide couples C12 to C175. Residues 45–46 (MS), 65–66 (EA), R73, and 89–92 (GPMR) contribute to the FAD site. Substrate is bound at residue R92. The N-linked (GlcNAc...) asparagine glycan is linked to N174. H225 lines the substrate pocket. V263 is an FAD binding site. A disulfide bridge links C333 with C414. Y374 provides a ligand contact to substrate. Residues E459 and 466 to 471 (GWIDST) each bind FAD. 466–467 (GW) is a substrate binding site.

This sequence belongs to the flavin monoamine oxidase family. FIG1 subfamily. Monomer. This is in contrast with most of its orthologs, that are non-covalently linked homodimers. Requires FAD as cofactor. As to expression, expressed by the venom gland.

The protein resides in the secreted. It catalyses the reaction an L-alpha-amino acid + O2 + H2O = a 2-oxocarboxylate + H2O2 + NH4(+). It carries out the reaction L-leucine + O2 + H2O = 4-methyl-2-oxopentanoate + H2O2 + NH4(+). In terms of biological role, catalyzes an oxidative deamination of predominantly hydrophobic and aromatic L-amino acids, thus producing hydrogen peroxide that may contribute to the diverse toxic effects of this enzyme. Shows activity on L-Leu. Damage cell membranes of the Gram-positive bacteria S.aureus (MIC=4 ug/ml and MBC=8 ug/ml) and the Gram-negative bacteria A.baumanni (MIC=2 ug/ml and MBC=4 ug/ml). This antibacterial activity is dependent on the production of hydrogen peroxyde, since it is inhibited by catalase, a hydrogen peroxyde scavenger. The protein is L-amino acid oxidase Bs29 of Bothriechis schlegelii (Eyelash palm pitviper).